A 141-amino-acid chain; its full sequence is Cystatin (141 aa).

The signal sequence occupies residues 1–26; that stretch reads MVHSQLPVAGPLRLLCALLLLPSATM. The 101-residue stretch at 29–129 folds into the Cystatin domain; that stretch reads GGLSPRSVTD…CRFQVWSRPW (101 aa). A Secondary area of contact motif is present at residues 73–77; it reads QVVSG. Intrachain disulfides connect cysteine 91/cysteine 107 and cysteine 120/cysteine 140.

Belongs to the cystatin family. Expressed at a low level by the venom gland (at protein level).

Its subcellular location is the secreted. Inhibits various C1 cysteine proteases including cathepsin L, papain and cathepsin B. This protein has no toxic activity and its function in the venom is unknown. It may play a role as a housekeeping or regulatory protein. The polypeptide is Cystatin (Pseudechis porphyriacus (Red-bellied black snake)).